Here is a 448-residue protein sequence, read N- to C-terminus: tRNA-2-methylthio-N(6)-dimethylallyladenosine synthase (448 aa).

The 116-residue stretch at 3–118 (KKVFIKTFGC…LPELLNARAA (116 aa)) folds into the MTTase N-terminal domain. Cys-12, Cys-49, Cys-81, Cys-155, Cys-159, and Cys-162 together coordinate [4Fe-4S] cluster. In terms of domain architecture, Radical SAM core spans 141–374 (RVEGASAFVS…QAVINRNILE (234 aa)). Residues 377 to 440 (QERVGTVQRL…TYTLRGEVVM (64 aa)) enclose the TRAM domain.

Belongs to the methylthiotransferase family. MiaB subfamily. In terms of assembly, monomer. [4Fe-4S] cluster is required as a cofactor.

The protein localises to the cytoplasm. The enzyme catalyses N(6)-dimethylallyladenosine(37) in tRNA + (sulfur carrier)-SH + AH2 + 2 S-adenosyl-L-methionine = 2-methylsulfanyl-N(6)-dimethylallyladenosine(37) in tRNA + (sulfur carrier)-H + 5'-deoxyadenosine + L-methionine + A + S-adenosyl-L-homocysteine + 2 H(+). Functionally, catalyzes the methylthiolation of N6-(dimethylallyl)adenosine (i(6)A), leading to the formation of 2-methylthio-N6-(dimethylallyl)adenosine (ms(2)i(6)A) at position 37 in tRNAs that read codons beginning with uridine. The polypeptide is tRNA-2-methylthio-N(6)-dimethylallyladenosine synthase (Acidovorax sp. (strain JS42)).